A 220-amino-acid polypeptide reads, in one-letter code: Probable 26S proteasome regulatory subunit p27 (220 aa).

One can recognise a PDZ domain in the interval 119 to 196 (ARRNNDDQAI…PVLLLREGQI (78 aa)).

The protein belongs to the proteasome subunit p27 family. Part of a transient complex containing NAS2, RPT4 and RPT5 formed during the assembly of the 26S proteasome.

Acts as a chaperone during the assembly of the 26S proteasome, specifically of the base subcomplex of the 19S regulatory complex (RC). During the base subcomplex assembly is part of a NAS2:RPT4:RPT5 module; NAS2 is released during the further base assembly process. The sequence is that of Probable 26S proteasome regulatory subunit p27 (NAS2) from Saccharomyces cerevisiae (strain ATCC 204508 / S288c) (Baker's yeast).